A 117-amino-acid polypeptide reads, in one-letter code: Large ribosomal subunit protein uL18 (117 aa).

Belongs to the universal ribosomal protein uL18 family. As to quaternary structure, part of the 50S ribosomal subunit; part of the 5S rRNA/L5/L18/L25 subcomplex. Contacts the 5S and 23S rRNAs.

Its function is as follows. This is one of the proteins that bind and probably mediate the attachment of the 5S RNA into the large ribosomal subunit, where it forms part of the central protuberance. The sequence is that of Large ribosomal subunit protein uL18 from Sodalis glossinidius (strain morsitans).